The sequence spans 132 residues: Pro-MCH 1 (132 aa).

Positions 1 to 24 (MRDSVLSVIFALALFLECYTPSMA) are cleaved as a signal peptide. A disulfide bond links C120 and C129.

It belongs to the MCH family. Pituitary gland. Produced in neurons of lateral basal hypothalamus which project both to the brain and to the neural lobe of the pituitary gland from where MCH is released.

Its function is as follows. Plays a role in skin pigmentation by antagonizing the action of melanotropin alpha. Induces melanin concentration within the melanophores. May participate in the control of the hypothalamo-pituitary adrenal gland axis by inhibiting the release of ACTH. The polypeptide is Pro-MCH 1 (mch1) (Oncorhynchus kisutch (Coho salmon)).